Here is an 89-residue protein sequence, read N- to C-terminus: Large ribosomal subunit protein bL27 (89 aa).

The interval 1-26 (MATKKAGGSSKNGRDSAGRRLGLKKS) is disordered.

This sequence belongs to the bacterial ribosomal protein bL27 family.

This is Large ribosomal subunit protein bL27 from Orientia tsutsugamushi (strain Ikeda) (Rickettsia tsutsugamushi).